The following is a 764-amino-acid chain: Elongation factor G, mitochondrial (764 aa).

The N-terminal 23 residues, 1 to 23 (MIRSLRAVSRLGARGFSSFAAAR), are a transit peptide targeting the mitochondrion. Residues 56 to 337 (ARMRNIGISA…AICEYLPDPS (282 aa)) form the tr-type G domain. GTP is bound by residues 65–72 (AHIDSGKT), 136–140 (DTPGH), and 190–193 (NKMD).

It belongs to the TRAFAC class translation factor GTPase superfamily. Classic translation factor GTPase family. EF-G/EF-2 subfamily.

The protein resides in the mitochondrion. It functions in the pathway protein biosynthesis; polypeptide chain elongation. In terms of biological role, mitochondrial GTPase that catalyzes the GTP-dependent ribosomal translocation step during translation elongation. During this step, the ribosome changes from the pre-translocational (PRE) to the post-translocational (POST) state as the newly formed A-site-bound peptidyl-tRNA and P-site-bound deacylated tRNA move to the P and E sites, respectively. Catalyzes the coordinated movement of the two tRNA molecules, the mRNA and conformational changes in the ribosome. The sequence is that of Elongation factor G, mitochondrial from Yarrowia lipolytica (strain CLIB 122 / E 150) (Yeast).